A 294-amino-acid chain; its full sequence is 33 kDa chaperonin (294 aa).

2 disulfides stabilise this stretch: cysteine 238/cysteine 240 and cysteine 271/cysteine 274.

The protein belongs to the HSP33 family. In terms of processing, under oxidizing conditions two disulfide bonds are formed involving the reactive cysteines. Under reducing conditions zinc is bound to the reactive cysteines and the protein is inactive.

The protein localises to the cytoplasm. In terms of biological role, redox regulated molecular chaperone. Protects both thermally unfolding and oxidatively damaged proteins from irreversible aggregation. Plays an important role in the bacterial defense system toward oxidative stress. The sequence is that of 33 kDa chaperonin from Staphylococcus carnosus (strain TM300).